A 366-amino-acid polypeptide reads, in one-letter code: Glucose 1-dehydrogenase (366 aa).

C39 lines the Zn(2+) pocket. T41 contacts substrate. Residues H66 and E67 each coordinate Zn(2+). N89 is a substrate binding site. Zn(2+) contacts are provided by C93, C96, C99, and C107. Residues E114, Q150, and D154 each coordinate substrate. Q150 is a Zn(2+) binding site. NADP(+) is bound by residues 189 to 192, 211 to 213, 277 to 279, 305 to 307, and K354; these read TGPI, NRR, FGF, and LVN. N307 is a binding site for substrate.

The protein belongs to the zinc-containing alcohol dehydrogenase family. Glucose 1-dehydrogenase subfamily. As to quaternary structure, homotetramer. It depends on Zn(2+) as a cofactor.

It carries out the reaction D-glucose + NAD(+) = D-glucono-1,5-lactone + NADH + H(+). It catalyses the reaction D-glucose + NADP(+) = D-glucono-1,5-lactone + NADPH + H(+). The catalysed reaction is D-galactose + NAD(+) = D-galactono-1,4-lactone + NADH + H(+). The enzyme catalyses D-galactose + NADP(+) = D-galactono-1,5-lactone + NADPH + H(+). It carries out the reaction an aldopyranose + NAD(+) = aldono-1,5-lactone + NADH + H(+). It catalyses the reaction an aldopyranose + NADP(+) = aldono-1,5-lactone + NADPH + H(+). Inhibited by EDTA in vitro. Catalyzes the NAD(P)(+)-dependent oxidation of D-glucose to D-gluconate via gluconolactone. Displays broad substrate specificity since it is able to catalyze the oxidation of a number of alternative aldose sugars, such as D-galactose, D-xylose and L-arabinose, to the corresponding glyconate. Can utilize both NAD(+) and NADP(+) as electron acceptor. Physiologically, seems to be involved in the degradation of both glucose and galactose through a non-phosphorylative variant of the Entner-Doudoroff pathway. This Saccharolobus solfataricus (Sulfolobus solfataricus) protein is Glucose 1-dehydrogenase.